The sequence spans 637 residues: Type II restriction enzyme and methyltransferase RM.BcgI (637 aa).

The protein in the C-terminal section; belongs to the N(4)/N(6)-methyltransferase family. In terms of assembly, heterotrimer of two A and one B subunit. Both subunits are necessary for DNA-binding, which is sequence non-specific. Mg(2+) serves as cofactor.

It catalyses the reaction Endonucleolytic cleavage of DNA to give specific double-stranded fragments with terminal 5'-phosphates.. The catalysed reaction is a 2'-deoxyadenosine in DNA + S-adenosyl-L-methionine = an N(6)-methyl-2'-deoxyadenosine in DNA + S-adenosyl-L-homocysteine + H(+). DNA restriction requires S-adenosyl-L-methionine and Mg(2+), and is inhibited by S-adenosyl-homocysteine. SAM may be a cofactor for DNA restriction. In terms of biological role, a B, G, H and S subtype restriction enzyme that recognizes the double-stranded sequence 5'-CGAN(6)TGC-3' and cleaves bilaterally and symmetrically 10 base pairs upstream and 12 base pairs downstream of the sequence to release a 34-base pair fragment. Methylation of the recognition sequence occurs on the adenine in either one or both strands; seems to methylate restricted DNA. This subunit has no methylation or DNA restriction activity on its own. This is Type II restriction enzyme and methyltransferase RM.BcgI from Heyndrickxia coagulans (Weizmannia coagulans).